We begin with the raw amino-acid sequence, 136 residues long: Large ribosomal subunit protein uL16 (136 aa).

It belongs to the universal ribosomal protein uL16 family. In terms of assembly, part of the 50S ribosomal subunit.

Its function is as follows. Binds 23S rRNA and is also seen to make contacts with the A and possibly P site tRNAs. The chain is Large ribosomal subunit protein uL16 from Wigglesworthia glossinidia brevipalpis.